A 287-amino-acid polypeptide reads, in one-letter code: Protease HtpX (287 aa).

Transmembrane regions (helical) follow at residues 4–24 (IFLL…VMSI) and 33–53 (GGLL…SLAI). His-139 serves as a coordination point for Zn(2+). The active site involves Glu-140. His-143 is a binding site for Zn(2+). Helical transmembrane passes span 154–174 (LIQG…AGII) and 195–215 (AVVF…VAYF). Residue Glu-220 participates in Zn(2+) binding.

Belongs to the peptidase M48B family. Zn(2+) is required as a cofactor.

The protein resides in the cell inner membrane. The polypeptide is Protease HtpX (Shewanella baltica (strain OS185)).